An 808-amino-acid polypeptide reads, in one-letter code: Auxin response factor 4 (808 aa).

Positions 1–13 (MPPAAMAPPPPPQ) are enriched in pro residues. A disordered region spans residues 1 to 20 (MPPAAMAPPPPPQGSSTGDP). A DNA-binding region (TF-B3) is located at residues 129 to 231 (FCKTLTASDT…ELRVGVRRAM (103 aa)). The segment covering 342 to 352 (PSTIPRPDRVS) has biased composition (basic and acidic residues). Disordered regions lie at residues 342–433 (PSTI…DSDV), 661–691 (TAGT…VAST), and 778–808 (QKMN…KSDN). A compositionally biased stretch (polar residues) spans 402-432 (AQAQRSQNSTVLQGQEQMTLRSNLTESNDSD). In terms of domain architecture, PB1 spans 692–785 (RSCTKVHKQG…EVQKMNSKSN (94 aa)). A compositionally biased stretch (basic and acidic residues) spans 787-799 (PRKDDSSENEKGH).

The protein belongs to the ARF family. As to quaternary structure, homodimers and heterodimers. In terms of tissue distribution, expressed in roots, culms, leaves and young panicles.

It localises to the nucleus. In terms of biological role, auxin response factors (ARFs) are transcriptional factors that bind specifically to the DNA sequence 5'-TGTCTC-3' found in the auxin-responsive promoter elements (AuxREs). This is Auxin response factor 4 (ARF4) from Oryza sativa subsp. japonica (Rice).